The sequence spans 385 residues: DNA replication and repair protein RecF (385 aa).

ATP is bound at residue 30 to 37 (GPNGYGKT).

It belongs to the RecF family.

It is found in the cytoplasm. Its function is as follows. The RecF protein is involved in DNA metabolism; it is required for DNA replication and normal SOS inducibility. RecF binds preferentially to single-stranded, linear DNA. It also seems to bind ATP. In Mycobacterium bovis (strain ATCC BAA-935 / AF2122/97), this protein is DNA replication and repair protein RecF.